The sequence spans 138 residues: Holo-[acyl-carrier-protein] synthase (138 aa).

2 residues coordinate Mg(2+): Asp-8 and Glu-56.

Belongs to the P-Pant transferase superfamily. AcpS family. Requires Mg(2+) as cofactor.

The protein resides in the cytoplasm. It catalyses the reaction apo-[ACP] + CoA = holo-[ACP] + adenosine 3',5'-bisphosphate + H(+). Transfers the 4'-phosphopantetheine moiety from coenzyme A to a Ser of acyl-carrier-protein. This Clostridium novyi (strain NT) protein is Holo-[acyl-carrier-protein] synthase.